An 85-amino-acid chain; its full sequence is Small ribosomal subunit protein uS17 (85 aa).

Belongs to the universal ribosomal protein uS17 family. In terms of assembly, part of the 30S ribosomal subunit.

In terms of biological role, one of the primary rRNA binding proteins, it binds specifically to the 5'-end of 16S ribosomal RNA. The chain is Small ribosomal subunit protein uS17 from Mesoplasma florum (strain ATCC 33453 / NBRC 100688 / NCTC 11704 / L1) (Acholeplasma florum).